A 381-amino-acid chain; its full sequence is Testis-specific expressed protein 55 (381 aa).

2 disordered regions span residues 1 to 176 and 292 to 317; these read MDEP…SDPH and TTEYTSDTTPVFDQGRSSQRSSQSSR. Basic and acidic residues-rich tracts occupy residues 8 to 24 and 65 to 103; these read SLNHENTTRAPDNEKNN and RTSEEAEQRSSQPTEHRLPGHAERRASQQAERRLSERRT. The span at 104–113 shows a compositional bias: polar residues; sequence SQPPNQQLPS. The span at 114-125 shows a compositional bias: basic and acidic residues; it reads HSERKTSGKIDG. The span at 134–143 shows a compositional bias: acidic residues; the sequence is TDQETSEFDD. Composition is skewed to polar residues over residues 147 to 163 and 292 to 302; these read SASTDYLSARSQQQEYN and TTEYTSDTTPV. The span at 307–317 shows a compositional bias: low complexity; sequence RSSQRSSQSSR.

Testis-specific.

The protein localises to the nucleus. This chain is Testis-specific expressed protein 55, found in Mus musculus (Mouse).